A 513-amino-acid chain; its full sequence is L-threonine dehydratase biosynthetic IlvA (513 aa).

Lys61 is modified (N6-(pyridoxal phosphate)lysine). Pyridoxal 5'-phosphate contacts are provided by residues Asn88, 187-191, and Ser314; that span reads GGGGL. ACT-like domains lie at 338–409 and 432–504; these read ALLA…DLSN and RLYS…DVTE.

The protein belongs to the serine/threonine dehydratase family. In terms of assembly, homotetramer. Pyridoxal 5'-phosphate serves as cofactor.

The catalysed reaction is L-threonine = 2-oxobutanoate + NH4(+). The protein operates within amino-acid biosynthesis; L-isoleucine biosynthesis; 2-oxobutanoate from L-threonine: step 1/1. Functionally, catalyzes the anaerobic formation of alpha-ketobutyrate and ammonia from threonine in a two-step reaction. The first step involved a dehydration of threonine and a production of enamine intermediates (aminocrotonate), which tautomerizes to its imine form (iminobutyrate). Both intermediates are unstable and short-lived. The second step is the nonenzymatic hydrolysis of the enamine/imine intermediates to form 2-ketobutyrate and free ammonia. In the low water environment of the cell, the second step is accelerated by RidA. The chain is L-threonine dehydratase biosynthetic IlvA (ilvA) from Pasteurella multocida (strain Pm70).